The sequence spans 315 residues: Acetyl-coenzyme A carboxylase carboxyl transferase subunit alpha (315 aa).

Residues 40–293 form the CoA carboxyltransferase C-terminal domain; it reads LEDKKIALTK…KKNVLAALDR (254 aa).

It belongs to the AccA family. Acetyl-CoA carboxylase is a heterohexamer composed of biotin carboxyl carrier protein (AccB), biotin carboxylase (AccC) and two subunits each of ACCase subunit alpha (AccA) and ACCase subunit beta (AccD).

The protein resides in the cytoplasm. It carries out the reaction N(6)-carboxybiotinyl-L-lysyl-[protein] + acetyl-CoA = N(6)-biotinyl-L-lysyl-[protein] + malonyl-CoA. It functions in the pathway lipid metabolism; malonyl-CoA biosynthesis; malonyl-CoA from acetyl-CoA: step 1/1. Functionally, component of the acetyl coenzyme A carboxylase (ACC) complex. First, biotin carboxylase catalyzes the carboxylation of biotin on its carrier protein (BCCP) and then the CO(2) group is transferred by the carboxyltransferase to acetyl-CoA to form malonyl-CoA. This Marinomonas sp. (strain MWYL1) protein is Acetyl-coenzyme A carboxylase carboxyl transferase subunit alpha.